Reading from the N-terminus, the 57-residue chain is UPF0391 membrane protein IL0696 (57 aa).

2 helical membrane-spanning segments follow: residues 4-24 and 28-48; these read WVLI…GGIA and AGIA…SLVV.

It belongs to the UPF0391 family.

The protein resides in the cell membrane. This is UPF0391 membrane protein IL0696 from Idiomarina loihiensis (strain ATCC BAA-735 / DSM 15497 / L2-TR).